The chain runs to 306 residues: Acetyl-coenzyme A carboxylase carboxyl transferase subunit beta (306 aa).

The CoA carboxyltransferase N-terminal domain maps to 25–294 (LWIKDPTSGE…VVTPSPPSPT (270 aa)). The segment at 284–306 (AVVTPSPPSPTDSQTSLSKTKAA) is disordered.

The protein belongs to the AccD/PCCB family. As to quaternary structure, acetyl-CoA carboxylase is a heterohexamer composed of biotin carboxyl carrier protein (AccB), biotin carboxylase (AccC) and two subunits each of ACCase subunit alpha (AccA) and ACCase subunit beta (AccD).

It localises to the cytoplasm. It carries out the reaction N(6)-carboxybiotinyl-L-lysyl-[protein] + acetyl-CoA = N(6)-biotinyl-L-lysyl-[protein] + malonyl-CoA. Its pathway is lipid metabolism; malonyl-CoA biosynthesis; malonyl-CoA from acetyl-CoA: step 1/1. In terms of biological role, component of the acetyl coenzyme A carboxylase (ACC) complex. Biotin carboxylase (BC) catalyzes the carboxylation of biotin on its carrier protein (BCCP) and then the CO(2) group is transferred by the transcarboxylase to acetyl-CoA to form malonyl-CoA. In Bartonella tribocorum (strain CIP 105476 / IBS 506), this protein is Acetyl-coenzyme A carboxylase carboxyl transferase subunit beta.